A 332-amino-acid chain; its full sequence is L-lactate dehydrogenase A chain (332 aa).

An N-acetylalanine modification is found at Ala-2. An N6-acetyllysine; alternate modification is found at Lys-5. Lys-5 is modified (N6-succinyllysine; alternate). N6-acetyllysine is present on Lys-14. Thr-18 is subject to Phosphothreonine. An NAD(+)-binding site is contributed by 29-57; sequence GAVGMACAISILMKDLADELALVDVIEDK. Lys-57 is modified (N6-acetyllysine; alternate). Residue Lys-57 forms a Glycyl lysine isopeptide (Lys-Gly) (interchain with G-Cter in SUMO2); alternate linkage. N6-acetyllysine is present on Lys-81. Residue Arg-99 participates in NAD(+) binding. Arg-106 contacts substrate. Lys-118 carries the post-translational modification N6-acetyllysine; alternate. Lys-118 carries the N6-succinyllysine; alternate modification. Lys-126 carries the post-translational modification N6-acetyllysine. Positions 138 and 169 each coordinate substrate. Catalysis depends on His-193, which acts as the Proton acceptor. N6-acetyllysine occurs at positions 224 and 232. At Tyr-239 the chain carries Phosphotyrosine. An N6-acetyllysine modification is found at Lys-243. A substrate-binding site is contributed by Thr-248. Thr-309 is subject to Phosphothreonine. Ser-310 carries the post-translational modification Phosphoserine. Lys-318 is subject to N6-acetyllysine; alternate. Lys-318 carries the N6-succinyllysine; alternate modification. At Thr-322 the chain carries Phosphothreonine.

The protein belongs to the LDH/MDH superfamily. LDH family. In terms of assembly, homotetramer. Interacts with PTEN upstream reading frame protein MP31. Post-translationally, ISGylated.

It localises to the cytoplasm. It catalyses the reaction (S)-lactate + NAD(+) = pyruvate + NADH + H(+). It functions in the pathway fermentation; pyruvate fermentation to lactate; (S)-lactate from pyruvate: step 1/1. Interconverts simultaneously and stereospecifically pyruvate and lactate with concomitant interconversion of NADH and NAD(+). The chain is L-lactate dehydrogenase A chain (LDHA) from Pongo abelii (Sumatran orangutan).